A 353-amino-acid polypeptide reads, in one-letter code: Interferon-stimulated 20 kDa exonuclease-like 2 (353 aa).

Disordered stretches follow at residues 1 to 93 and 125 to 172; these read MSTL…QPLD and ALPK…SGAS. Basic and acidic residues predominate over residues 14 to 23; sequence PPKKALEGNA. A compositionally biased stretch (basic residues) spans 24–35; sequence KHRNFVKKRRLL. Residues 54–63 show a composition bias toward basic and acidic residues; the sequence is LHSEPSKKGE. The span at 135 to 151 shows a compositional bias: basic residues; it reads RSQKKSSQKKSSKKNHP. Residues 152 to 172 show a composition bias toward polar residues; it reads QKNAPQNSTQAHSENKCSGAS. An Exonuclease domain is found at 178–353; that stretch reads KMVAIDCEMV…EHLARNPPTD (176 aa).

Its subcellular location is the nucleus. The protein localises to the nucleolus. 3'-&gt; 5'-exoribonuclease involved in ribosome biogenesis in the processing of the 12S pre-rRNA. Displays a strong specificity for a 3'-end containing a free hydroxyl group. The sequence is that of Interferon-stimulated 20 kDa exonuclease-like 2 (ISG20L2) from Homo sapiens (Human).